A 147-amino-acid polypeptide reads, in one-letter code: Deoxyuridine 5'-triphosphate nucleotidohydrolase (147 aa).

Residues 63–65, Asn76, and 80–82 each bind substrate; these read RSG and TID.

The protein belongs to the dUTPase family. Mg(2+) serves as cofactor.

It catalyses the reaction dUTP + H2O = dUMP + diphosphate + H(+). It functions in the pathway pyrimidine metabolism; dUMP biosynthesis; dUMP from dCTP (dUTP route): step 2/2. Its function is as follows. This enzyme is involved in nucleotide metabolism: it produces dUMP, the immediate precursor of thymidine nucleotides and it decreases the intracellular concentration of dUTP so that uracil cannot be incorporated into DNA. The protein is Deoxyuridine 5'-triphosphate nucleotidohydrolase of Chlamydia abortus (strain DSM 27085 / S26/3) (Chlamydophila abortus).